A 440-amino-acid polypeptide reads, in one-letter code: Phosphoglycerate kinase, glycosomal (440 aa).

Positions 23, 24, 25, 26, 39, 61, 62, 64, 65, 135, 171, and 172 each coordinate (2R)-3-phosphoglycerate. G217 lines the CDP pocket. Residue A218 coordinates ADP. A218 and K219 together coordinate AMP. Residue A218 coordinates ATP. A218 serves as a coordination point for Mg(2+). A (2R)-3-phosphoglycerate-binding site is contributed by K219. Position 222 (D222) interacts with CDP. Residue D222 participates in Mg(2+) binding. The ADP site is built by K223 and G241. K223 contacts AMP. G241 is a CDP binding site. Residues A242 and A314 each coordinate AMP. ATP-binding residues include A242 and A314. A314 and N338 together coordinate ADP. CDP contacts are provided by G339 and F344. 4 residues coordinate ADP: F344, E345, D377, and S378. E345 serves as a coordination point for AMP. ATP contacts are provided by D377 and S378. Residue D377 participates in Mg(2+) binding.

It belongs to the phosphoglycerate kinase family. Monomer. Mg(2+) serves as cofactor.

The protein localises to the glycosome. The catalysed reaction is (2R)-3-phosphoglycerate + ATP = (2R)-3-phospho-glyceroyl phosphate + ADP. It participates in carbohydrate degradation; glycolysis; pyruvate from D-glyceraldehyde 3-phosphate: step 2/5. The protein is Phosphoglycerate kinase, glycosomal of Trypanosoma brucei brucei.